Reading from the N-terminus, the 186-residue chain is Adenine phosphoribosyltransferase (186 aa).

Belongs to the purine/pyrimidine phosphoribosyltransferase family. As to quaternary structure, homodimer.

The protein localises to the cytoplasm. The catalysed reaction is AMP + diphosphate = 5-phospho-alpha-D-ribose 1-diphosphate + adenine. Its pathway is purine metabolism; AMP biosynthesis via salvage pathway; AMP from adenine: step 1/1. Catalyzes a salvage reaction resulting in the formation of AMP, that is energically less costly than de novo synthesis. The polypeptide is Adenine phosphoribosyltransferase (Xanthomonas axonopodis pv. citri (strain 306)).